Consider the following 184-residue polypeptide: UPF0669 protein C6orf120 homolog (184 aa).

Residues 1-23 (MAAPWTGALLLLLASQAVSSAQA) form the signal peptide. Asn47 is a glycosylation site (N-linked (GlcNAc...) asparagine).

The protein belongs to the UPF0669 family.

It localises to the secreted. In terms of biological role, may be involved in induction of apoptosis in CD4(+) T-cells, but not CD8(+) T-cells or hepatocytes. The sequence is that of UPF0669 protein C6orf120 homolog from Bos taurus (Bovine).